The chain runs to 340 residues: 4-hydroxy-3-methylbut-2-enyl diphosphate reductase (340 aa).

Cys-19 contacts [4Fe-4S] cluster. 2 residues coordinate (2E)-4-hydroxy-3-methylbut-2-enyl diphosphate: His-50 and His-90. 2 residues coordinate dimethylallyl diphosphate: His-50 and His-90. The isopentenyl diphosphate site is built by His-50 and His-90. Position 112 (Cys-112) interacts with [4Fe-4S] cluster. His-141 serves as a coordination point for (2E)-4-hydroxy-3-methylbut-2-enyl diphosphate. His-141 provides a ligand contact to dimethylallyl diphosphate. Residue His-141 participates in isopentenyl diphosphate binding. Glu-143 serves as the catalytic Proton donor. Residue Thr-190 coordinates (2E)-4-hydroxy-3-methylbut-2-enyl diphosphate. Cys-220 contacts [4Fe-4S] cluster. Positions 248, 249, 250, and 292 each coordinate (2E)-4-hydroxy-3-methylbut-2-enyl diphosphate. Residues Ser-248, Ser-249, Asn-250, and Ser-292 each coordinate dimethylallyl diphosphate. Ser-248, Ser-249, Asn-250, and Ser-292 together coordinate isopentenyl diphosphate.

The protein belongs to the IspH family. It depends on [4Fe-4S] cluster as a cofactor.

It catalyses the reaction isopentenyl diphosphate + 2 oxidized [2Fe-2S]-[ferredoxin] + H2O = (2E)-4-hydroxy-3-methylbut-2-enyl diphosphate + 2 reduced [2Fe-2S]-[ferredoxin] + 2 H(+). The enzyme catalyses dimethylallyl diphosphate + 2 oxidized [2Fe-2S]-[ferredoxin] + H2O = (2E)-4-hydroxy-3-methylbut-2-enyl diphosphate + 2 reduced [2Fe-2S]-[ferredoxin] + 2 H(+). It functions in the pathway isoprenoid biosynthesis; dimethylallyl diphosphate biosynthesis; dimethylallyl diphosphate from (2E)-4-hydroxy-3-methylbutenyl diphosphate: step 1/1. Its pathway is isoprenoid biosynthesis; isopentenyl diphosphate biosynthesis via DXP pathway; isopentenyl diphosphate from 1-deoxy-D-xylulose 5-phosphate: step 6/6. Functionally, catalyzes the conversion of 1-hydroxy-2-methyl-2-(E)-butenyl 4-diphosphate (HMBPP) into a mixture of isopentenyl diphosphate (IPP) and dimethylallyl diphosphate (DMAPP). Acts in the terminal step of the DOXP/MEP pathway for isoprenoid precursor biosynthesis. The polypeptide is 4-hydroxy-3-methylbut-2-enyl diphosphate reductase (Thermus thermophilus (strain ATCC BAA-163 / DSM 7039 / HB27)).